We begin with the raw amino-acid sequence, 302 residues long: GTP cyclohydrolase FolE2 (302 aa).

It belongs to the GTP cyclohydrolase IV family.

It carries out the reaction GTP + H2O = 7,8-dihydroneopterin 3'-triphosphate + formate + H(+). The protein operates within cofactor biosynthesis; 7,8-dihydroneopterin triphosphate biosynthesis; 7,8-dihydroneopterin triphosphate from GTP: step 1/1. Functionally, converts GTP to 7,8-dihydroneopterin triphosphate. The polypeptide is GTP cyclohydrolase FolE2 (Pseudoalteromonas translucida (strain TAC 125)).